A 163-amino-acid polypeptide reads, in one-letter code: MKIPLIYNRILILFFFIANIIILDQVSKKWIINNLLLHEKKPLISIMNIFYVRNYGTAFNFFSNNPGEKNYILCLISSIAILIILKTMYNNTTIENFFYNIPSAFIISGAIGNFIDRCYLGYVIDFIDFHINNWHFATFNIADVSIFIGSVLFIYHNKYFLKN.

Helical transmembrane passes span 3–23, 70–90, and 94–114; these read IPLI…IIIL, NYIL…TMYN, and IENF…IGNF. Residues Asp-125 and Asp-143 contribute to the active site. A helical transmembrane segment spans residues 134 to 154; sequence WHFATFNIADVSIFIGSVLFI.

Belongs to the peptidase A8 family.

The protein localises to the cell membrane. It carries out the reaction Release of signal peptides from bacterial membrane prolipoproteins. Hydrolyzes -Xaa-Yaa-Zaa-|-(S,diacylglyceryl)Cys-, in which Xaa is hydrophobic (preferably Leu), and Yaa (Ala or Ser) and Zaa (Gly or Ala) have small, neutral side chains.. Its pathway is protein modification; lipoprotein biosynthesis (signal peptide cleavage). In terms of biological role, this protein specifically catalyzes the removal of signal peptides from prolipoproteins. The protein is Lipoprotein signal peptidase of Buchnera aphidicola subsp. Baizongia pistaciae (strain Bp).